A 91-amino-acid chain; its full sequence is C-C motif chemokine 5 (91 aa).

Residues 1–23 form the signal peptide; that stretch reads MKVSAATFAILLATATFRAPASA. Intrachain disulfides connect cysteine 33-cysteine 57 and cysteine 34-cysteine 73.

The protein belongs to the intercrine beta (chemokine CC) family.

It is found in the secreted. In terms of biological role, chemoattractant for blood monocytes, memory T-helper cells and eosinophils. Causes the release of histamine from basophils and activates eosinophils. May activate several chemokine receptors including CCR1, CCR3, CCR4 and CCR5. May also be an agonist of the G protein-coupled receptor GPR75. Together with GPR75, may play a role in neuron survival through activation of a downstream signaling pathway involving the PI3, Akt and MAP kinases. By activating GPR75 may also play a role in insulin secretion by islet cells. The sequence is that of C-C motif chemokine 5 (CCL5) from Canis lupus familiaris (Dog).